A 307-amino-acid polypeptide reads, in one-letter code: Ribonuclease HII (307 aa).

The RNase H type-2 domain occupies 44 to 235 (EPVAGVDEAG…VRRAGGRMEL (192 aa)). Residues aspartate 50, glutamate 51, and aspartate 144 each coordinate a divalent metal cation. Positions 241–307 (ADSDDSPGFA…SRPAELLEIP (67 aa)) are disordered. Positions 250 to 280 (ASGPAEAVPGPAGSAGAASAAARPAAAGPAG) are enriched in low complexity. The segment covering 287–296 (RAADLRDNGD) has biased composition (basic and acidic residues).

This sequence belongs to the RNase HII family. Requires Mn(2+) as cofactor. Mg(2+) is required as a cofactor.

It is found in the cytoplasm. The enzyme catalyses Endonucleolytic cleavage to 5'-phosphomonoester.. Its function is as follows. Endonuclease that specifically degrades the RNA of RNA-DNA hybrids. This chain is Ribonuclease HII, found in Acidothermus cellulolyticus (strain ATCC 43068 / DSM 8971 / 11B).